Here is a 359-residue protein sequence, read N- to C-terminus: Ni-sirohydrochlorin a,c-diamide reductive cyclase complex, component CfbD (359 aa).

This sequence belongs to the NifD/NifK/NifE/NifN family. Homodimer or monomer. The Ni-sirohydrochlorin a,c-diamide reductive cyclase complex is composed of a NifH homolog component CfbC and a NifD homolog component CfbD. [4Fe-4S] cluster is required as a cofactor.

The enzyme catalyses Ni-sirohydrochlorin a,c-diamide + 3 AH2 + ATP + H2O = 15,17(3)-seco-F430-17(3)-acid + 3 A + ADP + phosphate. Involved in the biosynthesis of the unique nickel-containing tetrapyrrole coenzyme F430, the prosthetic group of methyl-coenzyme M reductase (MCR), which plays a key role in methanogenesis and anaerobic methane oxidation. Catalyzes both the six-electron reduction of the tetrahydroporphyrin ring system and the gamma-lactamization of the c-acetamide side chain of Ni-sirohydrochlorin a,c-diamide to yield 15,17(3)-seco-F430-17(3)-acid (seco-F430), the last intermediate in the biosynthesis of the coenzyme F430. The polypeptide is Ni-sirohydrochlorin a,c-diamide reductive cyclase complex, component CfbD (Methanothermobacter thermautotrophicus (strain ATCC 29096 / DSM 1053 / JCM 10044 / NBRC 100330 / Delta H) (Methanobacterium thermoautotrophicum)).